The following is a 271-amino-acid chain: MNLDVEQKAPLVEHLIELRNRLMISVGAIIVGFILCYSFSEQIFEFLAAPLHEILGPQAKMIYTALHEAFFTQIKVSFFAGLFLAMPVLFTQMWLFIAPGLYQHERSAILPFLFVTPVLFFMGGTLAYYFVFPLAFKFFLGFQSSTIEALPSMREYLSLVIKLIIAFGITFELPVGLLLAIKAGVVSTAGLVDKRKYNIVLAFVAAAILTPPDPFTQVMLAIPIMLMYEISIFFGRGIERKRAEQEAAEEAQWAADHNVDDDDVDHPEHKA.

The next 5 helical transmembrane spans lie at 24-44 (ISVG…EQIF), 78-98 (FFAG…LFIA), 112-132 (FLFV…YFVF), 159-179 (LVIK…GLLL), and 215-235 (FTQV…IFFG). The interval 247 to 271 (AAEEAQWAADHNVDDDDVDHPEHKA) is disordered.

It belongs to the TatC family. The Tat system comprises two distinct complexes: a TatABC complex, containing multiple copies of TatA, TatB and TatC subunits, and a separate TatA complex, containing only TatA subunits. Substrates initially bind to the TatABC complex, which probably triggers association of the separate TatA complex to form the active translocon.

The protein localises to the cell inner membrane. Part of the twin-arginine translocation (Tat) system that transports large folded proteins containing a characteristic twin-arginine motif in their signal peptide across membranes. Together with TatB, TatC is part of a receptor directly interacting with Tat signal peptides. In Magnetococcus marinus (strain ATCC BAA-1437 / JCM 17883 / MC-1), this protein is Sec-independent protein translocase protein TatC.